Here is a 363-residue protein sequence, read N- to C-terminus: Chorismate synthase (363 aa).

Residues 42 to 61 form a disordered region; sequence QRDLDRRKPGTSRHTTQRQE. NADP(+) is bound by residues Arg-48 and Arg-54. FMN is bound by residues 125–127, 237–238, Gly-277, 292–296, and Arg-318; these read RSS, NA, and KPTSS.

It belongs to the chorismate synthase family. In terms of assembly, homotetramer. FMNH2 serves as cofactor.

The catalysed reaction is 5-O-(1-carboxyvinyl)-3-phosphoshikimate = chorismate + phosphate. Its pathway is metabolic intermediate biosynthesis; chorismate biosynthesis; chorismate from D-erythrose 4-phosphate and phosphoenolpyruvate: step 7/7. Its function is as follows. Catalyzes the anti-1,4-elimination of the C-3 phosphate and the C-6 proR hydrogen from 5-enolpyruvylshikimate-3-phosphate (EPSP) to yield chorismate, which is the branch point compound that serves as the starting substrate for the three terminal pathways of aromatic amino acid biosynthesis. This reaction introduces a second double bond into the aromatic ring system. The sequence is that of Chorismate synthase from Pseudomonas aeruginosa (strain LESB58).